The primary structure comprises 273 residues: Homeobox protein ceh-43 (273 aa).

2 disordered regions span residues Asn-47 to Phe-79 and Arg-153 to Ser-204. The homeobox DNA-binding region spans Met-102–Lys-161.

This sequence belongs to the distal-less homeobox family. Predominantly expressed in the head hypdodermis, neuronal support cells and CAN neurons.

It localises to the nucleus. Probable transcription factor. Binds to the sequence motif 5'-ATAAT-3' in regulatory elements. Required for development of the anterior hypodermis during embryonic morphogenesis for cell adhesion; also affects embryonic and larval viability. Modulates and maintains dopaminergic neuron differentiation. May activate dopamine pathway genes in concert with ETS domain-containing protein ast-1, and homeobox proteins ceh-40 and ceh-20. This Caenorhabditis elegans protein is Homeobox protein ceh-43 (ceh-43).